The chain runs to 85 residues: Protein RnfH (85 aa).

The protein belongs to the UPF0125 (RnfH) family.

The sequence is that of Protein RnfH from Cereibacter sphaeroides (strain ATCC 17029 / ATH 2.4.9) (Rhodobacter sphaeroides).